The sequence spans 77 residues: Large ribosomal subunit protein bL28 (77 aa).

Belongs to the bacterial ribosomal protein bL28 family.

The polypeptide is Large ribosomal subunit protein bL28 (Leptothrix cholodnii (strain ATCC 51168 / LMG 8142 / SP-6) (Leptothrix discophora (strain SP-6))).